The chain runs to 130 residues: Small ribosomal subunit protein uS8 (130 aa).

This sequence belongs to the universal ribosomal protein uS8 family. Part of the 30S ribosomal subunit.

One of the primary rRNA binding proteins, it binds directly to 16S rRNA central domain where it helps coordinate assembly of the platform of the 30S subunit. The chain is Small ribosomal subunit protein uS8 from Methanobrevibacter smithii (strain ATCC 35061 / DSM 861 / OCM 144 / PS).